We begin with the raw amino-acid sequence, 206 residues long: Protein GrpE (206 aa).

The span at 1–10 (MTDPDLHQND) shows a compositional bias: basic and acidic residues. The segment at 1-38 (MTDPDLHQNDPENPAQASEPVVSKPYIMPDDPETGSAE) is disordered.

It belongs to the GrpE family. Homodimer.

It localises to the cytoplasm. Participates actively in the response to hyperosmotic and heat shock by preventing the aggregation of stress-denatured proteins, in association with DnaK and GrpE. It is the nucleotide exchange factor for DnaK and may function as a thermosensor. Unfolded proteins bind initially to DnaJ; upon interaction with the DnaJ-bound protein, DnaK hydrolyzes its bound ATP, resulting in the formation of a stable complex. GrpE releases ADP from DnaK; ATP binding to DnaK triggers the release of the substrate protein, thus completing the reaction cycle. Several rounds of ATP-dependent interactions between DnaJ, DnaK and GrpE are required for fully efficient folding. The sequence is that of Protein GrpE from Bradyrhizobium sp. (strain ORS 278).